The sequence spans 536 residues: CUGBP Elav-like family member 2 (536 aa).

3 RRM domains span residues I58–S141, R150–T230, and A451–S529.

It belongs to the CELF/BRUNOL family.

The protein resides in the nucleus. It localises to the cytoplasm. RNA-binding protein implicated in the regulation of several post-transcriptional events. May be involved in pre-mRNA alternative splicing, mRNA translation repression and stability. This chain is CUGBP Elav-like family member 2 (celf2), found in Xenopus laevis (African clawed frog).